The chain runs to 75 residues: DNA-directed RNA polymerase subunit omega (75 aa).

Belongs to the RNA polymerase subunit omega family. In terms of assembly, in cyanobacteria the RNAP catalytic core is composed of 2 alpha, 1 beta, 1 beta', 1 gamma and 1 omega subunit. When a sigma factor is associated with the core the holoenzyme is formed, which can initiate transcription.

It catalyses the reaction RNA(n) + a ribonucleoside 5'-triphosphate = RNA(n+1) + diphosphate. Functionally, promotes RNA polymerase assembly. Latches the N- and C-terminal regions of the beta' subunit thereby facilitating its interaction with the beta and alpha subunits. This is DNA-directed RNA polymerase subunit omega from Synechococcus sp. (strain CC9605).